Reading from the N-terminus, the 884-residue chain is Pyruvate, phosphate dikinase (884 aa).

Positions 1–351 (MSTRRVYFFG…LWMLQARAGK (351 aa)) are N-terminal. Arginine 99 provides a ligand contact to ATP. Residues 352–408 (RTGFAMVRIAIDMCKEGMLTEEEALLRIDANKINEFLFKRFDPSVKPVVLGKGIPAS) are linker 1. The segment at 409–507 (PGAAVGVICF…KFKEGDFISI (99 aa)) is central. At threonine 462 the chain carries Phosphothreonine; by PDRP1. Catalysis depends on histidine 464, which acts as the Tele-phosphohistidine intermediate. Positions 508 to 542 (NGTTGEIYNGAVQTIEPGITDDLQTIMDWSDKYRV) are linker 2. Residues 543 to 884 (LKIRTNADTP…IAAIKARTNQ (342 aa)) are C-terminal. Residues arginine 570, arginine 626, glutamate 753, glycine 774, threonine 775, asparagine 776, and aspartate 777 each contribute to the substrate site. Residue glutamate 753 coordinates Mg(2+). Aspartate 777 contributes to the Mg(2+) binding site. Residue cysteine 839 is the Proton donor of the active site.

This sequence belongs to the PEP-utilizing enzyme family. As to quaternary structure, homodimer. The cofactor is Mg(2+). Post-translationally, phosphorylation of Thr-462 in the dark inactivates the enzyme. Dephosphorylation upon light stimulation reactivates the enzyme.

The catalysed reaction is pyruvate + phosphate + ATP = phosphoenolpyruvate + AMP + diphosphate + H(+). With respect to regulation, activated by light-induced dephosphorylation. Inhibited by dark-induced phosphorylation. Both reactions are catalyzed by PDRP1. In terms of biological role, catalyzes the reversible phosphorylation of pyruvate and phosphate. This chain is Pyruvate, phosphate dikinase, found in Giardia intestinalis (Giardia lamblia).